The primary structure comprises 123 residues: ATP synthase epsilon chain (123 aa).

The segment at 96 to 123 is disordered; it reads ESRKQSAETEHDKAVAESELRAVKRMEA.

This sequence belongs to the ATPase epsilon chain family. In terms of assembly, F-type ATPases have 2 components, CF(1) - the catalytic core - and CF(0) - the membrane proton channel. CF(1) has five subunits: alpha(3), beta(3), gamma(1), delta(1), epsilon(1). CF(0) has three main subunits: a, b and c.

The protein localises to the cell membrane. Its function is as follows. Produces ATP from ADP in the presence of a proton gradient across the membrane. This Corynebacterium jeikeium (strain K411) protein is ATP synthase epsilon chain.